Reading from the N-terminus, the 583-residue chain is MAEGDEAARGQQPHQGLWRRRRTSDPSAAVNHVSSTTSLGENYEDDDLVNSDEVMKKPCPVQIVLAHEDDHNFELDEEALEQILLQEHIRDLNIVVVSVAGAFRKGKSFLLDFMLRYMYNKDSQSWIGGNNEPLTGFTWRGGCERETTGIQVWNEVFVIDRPNGTKVAVLLMDTQGAFDSQSTIKDCATVFALSTMTSSVQVYNLSQNIQEDDLQHLQLFTEYGRLAMEEIYQKPFQTLMFLIRDWSYPYEHSYGLEGGKQFLEKRLQVKQNQHEELQNVRKHIHNCFSNLGCFLLPHPGLKVATNPSFDGRLKDIDEDFKRELRNLVPLLLAPENLVEKEISGSKVTCRDLVEYFKAYIKIYQGEELPHPKSMLQATAEANNLAAVAGARDTYCKSMEQVCGGDKPYIAPSDLERKHLDLKEVAIKQFRSVKKMGGDEFCRRYQDQLEAEIEETYANFIKHNDGKNIFYAARTPATLFAVMFAMYIISGLTGFIGLNSIAVLCNLVMGLALIFLCTWAYVKYSGEFREIGTVIDQIAETLWEQVLKPLGDNLMEENIRQSVTNSIKAGLTDQVSHHARLKTD.

Residues 1–44 are disordered; sequence MAEGDEAARGQQPHQGLWRRRRTSDPSAAVNHVSSTTSLGENYE. The tract at residues 1 to 60 is N-terminal hypervariable region (HVR); sequence MAEGDEAARGQQPHQGLWRRRRTSDPSAAVNHVSSTTSLGENYEDDDLVNSDEVMKKPCP. Residues 1–476 lie on the Cytoplasmic side of the membrane; it reads MAEGDEAARG…NIFYAARTPA (476 aa). Position 24 is a phosphoserine (Ser24). A GB1/RHD3-type G domain is found at 91-336; it reads DLNIVVVSVA…LVPLLLAPEN (246 aa). GDP is bound by residues Arg104, Lys105, Gly106, Lys107, Ser108, Phe109, Gln175, Arg244, and Asp245. Arg104, Lys105, Gly106, Lys107, Ser108, and Phe109 together coordinate GTP. Ser108 contacts Mg(2+). 2 residues coordinate GTP: Arg244 and Asp245. The stretch at 256-284 forms a coiled coil; sequence LEGGKQFLEKRLQVKQNQHEELQNVRKHI. Lys270 carries the N6-methyllysine modification. GDP is bound by residues Val303 and Asn306. Residue Val303 coordinates GTP. Residues 374 to 465 form a 3HB (three-helix bundle) domain region; it reads MLQATAEANN…YANFIKHNDG (92 aa). Residues 466–474 form a linker region; it reads KNIFYAART. Residues 477–497 traverse the membrane as a helical segment; it reads TLFAVMFAMYIISGLTGFIGL. Topologically, residues 498–499 are lumenal; that stretch reads NS. A helical membrane pass occupies residues 500–520; the sequence is IAVLCNLVMGLALIFLCTWAY. The Cytoplasmic segment spans residues 521 to 583; it reads VKYSGEFREI…VSHHARLKTD (63 aa). The segment at 547–583 is autoinhibitory domain; sequence KPLGDNLMEENIRQSVTNSIKAGLTDQVSHHARLKTD.

It belongs to the TRAFAC class dynamin-like GTPase superfamily. GB1/RHD3 GTPase family. GB1 subfamily. In terms of assembly, monomeric and homodimeric. The homodimer, transiently formed by two molecules on opposing membranes, is the active form mediating ER membrane fusion. Interacts with REEP5 and RTN3; these proteins are involved in endoplasmic reticulum tubular network organization. Interacts with ZFYVE27; both proteins are involved in endoplasmic reticulum tubular network organization. As to expression, expressed in peripheral tissues (at protein level).

The protein resides in the endoplasmic reticulum membrane. The enzyme catalyses GTP + H2O = GDP + phosphate + H(+). With its alternative C-terminus disrupting the autoinhibitory domain, this brain-specific isoform is probably more active at fusing ER membranes. Atlastin-2 (ATL2) is a membrane-anchored GTPase that mediates the GTP-dependent fusion of endoplasmic reticulum (ER) membranes, maintaining the continuous ER network. It facilitates the formation of three-way junctions where ER tubules intersect. Two atlastin-2 on neighboring ER tubules bind GTP and form loose homodimers through the GB1/RHD3-type G domains and 3HB regions. Upon GTP hydrolysis, the 3HB regions tighten, pulling the membranes together to drive their fusion. After fusion, the homodimer disassembles upon release of inorganic phosphate (Pi). Subsequently, GDP dissociates, resetting the monomers to a conformation ready for a new fusion cycle. This chain is Atlastin-2, found in Homo sapiens (Human).